The sequence spans 673 residues: Pesticin receptor (673 aa).

Positions 1 to 22 (MKMTRLYPLALGGLLLPAIANA) are cleaved as a signal peptide. The TonB box signature appears at 30–37 (STLEVTAS). A TBDR plug domain is found at 41-155 (SRSASANNVS…QGGIINIVTQ (115 aa)). The TBDR beta-barrel domain maps to 160–672 (TPRGYIEGGV…TVGINTRIDF (513 aa)). Residues 657-673 (QVNMGRTVGINTRIDFF) carry the TonB C-terminal box motif.

The protein belongs to the TonB-dependent receptor family.

It localises to the cell outer membrane. Functionally, receptor for the bacteriocin pesticin and for the siderophore yersiniabactin. This Yersinia enterocolitica serotype O:8 / biotype 1B (strain NCTC 13174 / 8081) protein is Pesticin receptor (fyuA).